We begin with the raw amino-acid sequence, 81 residues long: Small ribosomal subunit protein bS18 (81 aa).

Belongs to the bacterial ribosomal protein bS18 family. As to quaternary structure, part of the 30S ribosomal subunit. Forms a tight heterodimer with protein bS6.

In terms of biological role, binds as a heterodimer with protein bS6 to the central domain of the 16S rRNA, where it helps stabilize the platform of the 30S subunit. In Rubrobacter xylanophilus (strain DSM 9941 / JCM 11954 / NBRC 16129 / PRD-1), this protein is Small ribosomal subunit protein bS18.